The sequence spans 475 residues: MPASRTVRLIRLGCARNDVDAEELAARLVDAGWRLTEAPSADVTVVNTCGFIEAAKQESIDTLLEAADGSTRVVAVGCLAERYGAALADAMPEATILSFDDYPVIAQRLEDVLAGRPPAPHTPRDRRTLLPLTPVDRPRAAAEVGIPGHLGGPRVLRHRLDDSPVAPLKIASGCDRRCTFCAIPSFRGAFVSRPPADILREAQWLADHGAREIVLVSENSTSYGKDLGDPFALEKLLAAFGGVDGLVRVRVTYLQPAEVRPALIDVIATAPHVAPYFDLSFQHASPRVLRRMRRFGGSEEFLNLLAEIRRRNPRAAVRSNVIVGFPGETEEDVAELGEFLRAARLDGIGVFGYSDEDGTEASGFPEKIPEQEIRSRVDDIAGIAEEVTADRARARLGETVDVLIDGVDDDRPDACYGYTEVQAVDVDGVTVLRDCSAARGALVRAEIVEIDGVDFLAAPVTGSTAGTPSGATVEG.

Residues 5 to 114 (RTVRLIRLGC…IAQRLEDVLA (110 aa)) form the MTTase N-terminal domain. [4Fe-4S] cluster is bound by residues Cys14, Cys49, Cys78, Cys174, Cys178, and Cys181. The 231-residue stretch at 160-390 (LDDSPVAPLK…AGIAEEVTAD (231 aa)) folds into the Radical SAM core domain. Positions 393–461 (RARLGETVDV…GVDFLAAPVT (69 aa)) constitute a TRAM domain.

It belongs to the methylthiotransferase family. RimO subfamily. The cofactor is [4Fe-4S] cluster.

Its subcellular location is the cytoplasm. The catalysed reaction is L-aspartate(89)-[ribosomal protein uS12]-hydrogen + (sulfur carrier)-SH + AH2 + 2 S-adenosyl-L-methionine = 3-methylsulfanyl-L-aspartate(89)-[ribosomal protein uS12]-hydrogen + (sulfur carrier)-H + 5'-deoxyadenosine + L-methionine + A + S-adenosyl-L-homocysteine + 2 H(+). Its function is as follows. Catalyzes the methylthiolation of an aspartic acid residue of ribosomal protein uS12. The sequence is that of Ribosomal protein uS12 methylthiotransferase RimO from Acidothermus cellulolyticus (strain ATCC 43068 / DSM 8971 / 11B).